The following is a 245-amino-acid chain: Terpene cyclase ausL (245 aa).

Transmembrane regions (helical) follow at residues 17–37, 51–71, 76–96, 113–133, 138–158, 170–190, and 206–226; these read ILAISEVLKVVAAVGWSVNYI, IGILPLCCDIGWEFVYAWMFP, HWQGVVRVWFFLHSAVLLVTL, IVFIYIFVTIVFGAGQYALAA, ALGFHWGGALCQFLSSSGGIA, SYLIWFARAISTFAGFIKLCI, and MCWFYIVTVLSFDAAYPFLYF.

It belongs to the paxB family.

It is found in the membrane. It participates in secondary metabolite biosynthesis; terpenoid biosynthesis. Functionally, terpene cyclase; part of the gene cluster A that mediates the biosynthesis of the fungal meroterpenoid acetoxydehydroaustin. The first step of the pathway is the synthesis of 3,5-dimethylorsellinic acid by the polyketide synthase ausA. 3,5-dimethylorsellinic acid is then prenylated by the polyprenyl transferase ausN. Further epoxidation by the FAD-dependent monooxygenase ausM and cyclization by the probable terpene cyclase ausL lead to the formation of protoaustinoid A. Protoaustinoid A is then oxidized to spiro-lactone preaustinoid A3 by the combined action of the FAD-binding monooxygenases ausB and ausC, and the dioxygenase ausE. Acid-catalyzed keto-rearrangement and ring contraction of the tetraketide portion of preaustinoid A3 by ausJ lead to the formation of preaustinoid A4. The aldo-keto reductase ausK, with the help of ausH, is involved in the next step by transforming preaustinoid A4 into isoaustinone which is in turn hydroxylated by the P450 monooxygenase ausI to form austinolide. The cytochrome P450 monooxygenase ausG then modifies austinolide to austinol. Austinol is further acetylated to austin by the O-acetyltransferase ausP, which spontaneously changes to dehydroaustin. The cytochrome P450 monooxygenase then converts dehydroaustin is into 7-dehydrodehydroaustin. The hydroxylation catalyzed by ausR permits the second O-acetyltransferase ausQ to add an additional acetyl group to the molecule, leading to the formation of acetoxydehydroaustin. Due to genetic rearrangements of the clusters and the subsequent loss of some enzymes, the end product of the Penicillium brasilianum austinoid biosynthesis clusters is acetoxydehydroaustin. The sequence is that of Terpene cyclase ausL from Penicillium brasilianum.